The following is a 106-amino-acid chain: Large ribosomal subunit protein P1 (106 aa).

Residues 66 to 76 show a composition bias toward low complexity; that stretch reads AQPQATQAQPA. Residues 66–106 form a disordered region; it reads AQPQATQAQPAAEEKKEEKKEEEKKGPSEEEIASGLASLFG. Basic and acidic residues predominate over residues 77-93; sequence AEEKKEEKKEEEKKGPS.

Belongs to the eukaryotic ribosomal protein P1/P2 family. As to quaternary structure, part of the 50S ribosomal subunit. Homodimer, it forms part of the ribosomal stalk which helps the ribosome interact with GTP-bound translation factors. Forms a heptameric uL10/P0(P1)2(P1)2(P1)2 complex, where uL10/P0 forms an elongated spine to which the P1 dimers bind in a sequential fashion.

Forms part of the ribosomal stalk, playing a central role in the interaction of the ribosome with GTP-bound translation factors. This chain is Large ribosomal subunit protein P1, found in Saccharolobus solfataricus (strain ATCC 35092 / DSM 1617 / JCM 11322 / P2) (Sulfolobus solfataricus).